Here is a 399-residue protein sequence, read N- to C-terminus: MNVHEYQAKELLAKYGVGIPAGIAALTVEEAVAAAKQLPGPLYVVKAQIHAGGRGKGKFKELPADAKGGVRLAKSIEEVEAFAKEMLGNTLVTVQTGEAGKQVNRLYVTDGVDIDKEYYLSMVVDRATGRVAIIVSTEGGMDIEEVAHSTPEKIATIVIDPAEGFMPHHGRAVGFALKLSGDLLKQAAKIAEQLYTAFVALDCSMLEINPLVQTKDGNLLVLDTKMSFDSNALYRHPDVVALRDETEEDPAEIEASKYDLAYIKLDGNIGCMVNGAGLAMATMDIIKLNGEFPANFLDVGGGANKEKVTAAFKIILKDPAVKGILVNIFGGIMKCDIIAEGIVAAAKEVNLSVPLVVRLEGTNVQQGKDILANSGLPIVPANDLGDAAKKIVAEVRAVA.

Residues 9–254 (KELLAKYGVG…ETEEDPAEIE (246 aa)) enclose the ATP-grasp domain. Residues lysine 46, 53-55 (GRG), valine 112, and glutamate 117 each bind ATP. Asparagine 209 and aspartate 223 together coordinate Mg(2+). Residues asparagine 274 and 331–333 (GIM) contribute to the substrate site.

Belongs to the succinate/malate CoA ligase beta subunit family. As to quaternary structure, heterotetramer of two alpha and two beta subunits. Requires Mg(2+) as cofactor.

The enzyme catalyses succinate + ATP + CoA = succinyl-CoA + ADP + phosphate. It catalyses the reaction GTP + succinate + CoA = succinyl-CoA + GDP + phosphate. Its pathway is carbohydrate metabolism; tricarboxylic acid cycle; succinate from succinyl-CoA (ligase route): step 1/1. Functionally, succinyl-CoA synthetase functions in the citric acid cycle (TCA), coupling the hydrolysis of succinyl-CoA to the synthesis of either ATP or GTP and thus represents the only step of substrate-level phosphorylation in the TCA. The beta subunit provides nucleotide specificity of the enzyme and binds the substrate succinate, while the binding sites for coenzyme A and phosphate are found in the alpha subunit. The chain is Succinate--CoA ligase [ADP-forming] subunit beta from Novosphingobium aromaticivorans (strain ATCC 700278 / DSM 12444 / CCUG 56034 / CIP 105152 / NBRC 16084 / F199).